The primary structure comprises 345 residues: Putative [LysW]-L-2-aminoadipate/[LysW]-L-glutamate phosphate reductase (345 aa).

11–14 is an NADP(+) binding site; that stretch reads SGFT. The disordered stretch occupies residues 34–56; it reads TSRSKENKTIGHSHPNLRHSDLR. Cys146 is a catalytic residue. NADP(+) is bound at residue Asn309.

This sequence belongs to the NAGSA dehydrogenase family. Type 1 subfamily. LysY sub-subfamily.

It is found in the cytoplasm. It carries out the reaction [amino-group carrier protein]-C-terminal-N-(1-carboxy-5-oxopentan-1-yl)-L-glutamine + phosphate + NADP(+) = [amino-group carrier protein]-C-terminal-N-(1-carboxy-5-phosphooxy-5-oxopentan-1-yl)-L-glutamine + NADPH + H(+). It catalyses the reaction [amino-group carrier protein]-C-terminal-gamma-(L-glutamyl-5-semialdehyde)-L-glutamate + phosphate + NADP(+) = [amino-group carrier protein]-C-terminal-gamma-(5-phospho-L-glutamyl)-L-glutamate + NADPH + H(+). It participates in amino-acid biosynthesis; L-lysine biosynthesis via AAA pathway; L-lysine from L-alpha-aminoadipate (Thermus route): step 3/5. Its pathway is amino-acid biosynthesis; L-arginine biosynthesis. In terms of biological role, involved in both the arginine and lysine biosynthetic pathways. This Haloarcula marismortui (strain ATCC 43049 / DSM 3752 / JCM 8966 / VKM B-1809) (Halobacterium marismortui) protein is Putative [LysW]-L-2-aminoadipate/[LysW]-L-glutamate phosphate reductase.